The following is a 194-amino-acid chain: Holliday junction branch migration complex subunit RuvA (194 aa).

The interval Met1–Leu64 is domain I. Residues Arg65–Pro140 are domain II. Residues Pro140–Gln144 form a flexible linker region. The interval Leu145–Arg194 is domain III.

It belongs to the RuvA family. In terms of assembly, homotetramer. Forms an RuvA(8)-RuvB(12)-Holliday junction (HJ) complex. HJ DNA is sandwiched between 2 RuvA tetramers; dsDNA enters through RuvA and exits via RuvB. An RuvB hexamer assembles on each DNA strand where it exits the tetramer. Each RuvB hexamer is contacted by two RuvA subunits (via domain III) on 2 adjacent RuvB subunits; this complex drives branch migration. In the full resolvosome a probable DNA-RuvA(4)-RuvB(12)-RuvC(2) complex forms which resolves the HJ.

The protein localises to the cytoplasm. The RuvA-RuvB-RuvC complex processes Holliday junction (HJ) DNA during genetic recombination and DNA repair, while the RuvA-RuvB complex plays an important role in the rescue of blocked DNA replication forks via replication fork reversal (RFR). RuvA specifically binds to HJ cruciform DNA, conferring on it an open structure. The RuvB hexamer acts as an ATP-dependent pump, pulling dsDNA into and through the RuvAB complex. HJ branch migration allows RuvC to scan DNA until it finds its consensus sequence, where it cleaves and resolves the cruciform DNA. This chain is Holliday junction branch migration complex subunit RuvA, found in Xanthomonas euvesicatoria pv. vesicatoria (strain 85-10) (Xanthomonas campestris pv. vesicatoria).